Here is a 307-residue protein sequence, read N- to C-terminus: Probable protein S-acyltransferase 14 (307 aa).

Helical transmembrane passes span leucine 22 to valine 42 and isoleucine 63 to phenylalanine 83. A DHHC domain is found at arginine 127–phenylalanine 177. Cysteine 157 (S-palmitoyl cysteine intermediate) is an active-site residue. 2 consecutive transmembrane segments (helical) span residues tyrosine 171–methionine 191 and threonine 213–methionine 233.

The protein belongs to the DHHC palmitoyltransferase family.

It is found in the golgi apparatus. The protein resides in the trans-Golgi network membrane. The enzyme catalyses L-cysteinyl-[protein] + hexadecanoyl-CoA = S-hexadecanoyl-L-cysteinyl-[protein] + CoA. In terms of biological role, palmitoyl acyltransferase. The chain is Probable protein S-acyltransferase 14 (PAT14) from Arabidopsis thaliana (Mouse-ear cress).